A 304-amino-acid chain; its full sequence is Homoserine dehydrogenase (304 aa).

NADP(+) is bound by residues Y8, N10, V11, R38, R39, and S73. Y8 lines the NADPH pocket. Positions 11 and 38 each coordinate NADPH. Position 11 (V11) interacts with NAD(+). NADPH-binding residues include S73, S74, T100, and K102. Position 73 (S73) interacts with NAD(+). 2 residues coordinate NADP(+): T100 and K102. Residues V129 and T133 each coordinate Na(+). Residues G182 and E185 each contribute to the NADP(+) site. L-homoserine-binding residues include E185 and D196. K200 (proton donor) is an active-site residue. G284 is a binding site for NADP(+). Residue G284 coordinates NADPH. Residue G284 coordinates NAD(+).

It belongs to the homoserine dehydrogenase family. Homodimer. The cofactor is a metal cation. Post-translationally, the enzyme is activated by reductive cleavage of the interchain disulfide bond between the two subunits.

It carries out the reaction L-homoserine + NADP(+) = L-aspartate 4-semialdehyde + NADPH + H(+). It catalyses the reaction L-homoserine + NAD(+) = L-aspartate 4-semialdehyde + NADH + H(+). It functions in the pathway amino-acid biosynthesis; L-methionine biosynthesis via de novo pathway; L-homoserine from L-aspartate: step 3/3. The protein operates within amino-acid biosynthesis; L-threonine biosynthesis; L-threonine from L-aspartate: step 3/5. Its activity is regulated as follows. Inhibited by cysteine. Catalyzes the conversion of L-aspartate-beta-semialdehyde (L-Asa) to L-homoserine (L-Hse), the third step in the biosynthesis of threonine and methionine from aspartate. In Sulfurisphaera tokodaii (strain DSM 16993 / JCM 10545 / NBRC 100140 / 7) (Sulfolobus tokodaii), this protein is Homoserine dehydrogenase.